The primary structure comprises 180 residues: NADH-quinone oxidoreductase subunit I (180 aa).

2 consecutive 4Fe-4S ferredoxin-type domains span residues 48–80 (IVLTRDPDGAERCVACNLCAVACPVGCISLQKA) and 90–119 (EFFRINFSRCIFCGMCEEACPTTALQLTPD). [4Fe-4S] cluster-binding residues include Cys-60, Cys-63, Cys-66, Cys-70, Cys-99, Cys-102, Cys-105, and Cys-109.

This sequence belongs to the complex I 23 kDa subunit family. In terms of assembly, NDH-1 is composed of 13 different subunits. Subunits NuoA, H, J, K, L, M, N constitute the membrane sector of the complex. It depends on [4Fe-4S] cluster as a cofactor.

Its subcellular location is the cell inner membrane. The enzyme catalyses a quinone + NADH + 5 H(+)(in) = a quinol + NAD(+) + 4 H(+)(out). Functionally, NDH-1 shuttles electrons from NADH, via FMN and iron-sulfur (Fe-S) centers, to quinones in the respiratory chain. The immediate electron acceptor for the enzyme in this species is believed to be ubiquinone. Couples the redox reaction to proton translocation (for every two electrons transferred, four hydrogen ions are translocated across the cytoplasmic membrane), and thus conserves the redox energy in a proton gradient. The chain is NADH-quinone oxidoreductase subunit I from Edwardsiella ictaluri (strain 93-146).